A 513-amino-acid polypeptide reads, in one-letter code: ATP synthase subunit alpha 2 (513 aa).

ATP is bound at residue 169 to 176 (GDRQTGKT).

This sequence belongs to the ATPase alpha/beta chains family. As to quaternary structure, F-type ATPases have 2 components, CF(1) - the catalytic core - and CF(0) - the membrane proton channel. CF(1) has five subunits: alpha(3), beta(3), gamma(1), delta(1), epsilon(1). CF(0) has three main subunits: a(1), b(2) and c(9-12). The alpha and beta chains form an alternating ring which encloses part of the gamma chain. CF(1) is attached to CF(0) by a central stalk formed by the gamma and epsilon chains, while a peripheral stalk is formed by the delta and b chains.

The protein localises to the cell inner membrane. It catalyses the reaction ATP + H2O + 4 H(+)(in) = ADP + phosphate + 5 H(+)(out). In terms of biological role, produces ATP from ADP in the presence of a proton gradient across the membrane. The alpha chain is a regulatory subunit. The protein is ATP synthase subunit alpha 2 of Photobacterium profundum (strain SS9).